The primary structure comprises 509 residues: Midnolin (509 aa).

A compositionally biased stretch (polar residues) spans 1–12 (MDQHPSARSCSS). The tract at residues 1 to 27 (MDQHPSARSCSSRGAAPSCESVSGEPP) is disordered. Residues 28–102 (MNLYIHSTTG…LTLVPTVEAG (75 aa)) enclose the Ubiquitin-like domain. Disordered stretches follow at residues 172-295 (GSSE…NTPL), 370-404 (QCTS…ETQP), and 448-485 (KRLR…EGSL). The span at 176 to 190 (GTTGLSHGASGSASG) shows a compositional bias: low complexity. Residues 196–209 (HNPHPHHPHQHPHH) are compositionally biased toward basic residues. Residues 220 to 231 (AFPPSPSIPSIP) are compositionally biased toward pro residues. A compositionally biased stretch (low complexity) spans 261–285 (PSSACAPSPSSPSPAASCPEASCSA). The segment covering 286–295 (KTSGNCNTPL) has biased composition (polar residues). Positions 376-386 (SPAPSPPPSPP) are enriched in pro residues. Residues 387-400 (HTTGLTGLPTTVPS) show a composition bias toward low complexity.

Its subcellular location is the nucleus. It is found in the cytoplasm. It localises to the cytosol. The protein localises to the nucleolus. Facilitates ubiquitin-independent proteasomal degradation of polycomb protein CBX4. Plays a role in inhibiting the activity of glucokinase GCK and both glucose-induced and basal insulin secretion. The sequence is that of Midnolin (midn) from Danio rerio (Zebrafish).